The primary structure comprises 1050 residues: Ankyrin repeat domain-containing protein 27 (1050 aa).

The sufficient for GEF activity towards RAB21 stretch occupies residues 1–372 (MALYDEDLLK…RQGSLSAKPP (372 aa)). The VPS9 domain maps to 233-371 (ASEDAAFNKI…IRQGSLSAKP (139 aa)). ANK repeat units follow at residues 396–426 (SPTD…DKDT), 462–491 (RGHT…MVNA), 495–524 (HGAT…SAEV), 528–560 (NGNT…RLDI), 564–593 (KGDT…STEI), and 597–627 (LKET…RQKS). A sufficient for interaction with VPS29 region spans residues 396–460 (SPTDCLFKHI…PSVVTPFSRD (65 aa)). An interaction with RAB38 region spans residues 451–600 (PSVVTPFSRD…TEIQNRLKET (150 aa)). The interaction with RAB32 stretch occupies residues 451–730 (PSVVTPFSRD…APAQKRLAKV (280 aa)). Residues 625 to 665 (QKSSEAPVQSPQRSVDSISQESSTSSFSSMSASSRQEETKK) form a disordered region. A compositionally biased stretch (polar residues) spans 628–637 (SEAPVQSPQR). Low complexity predominate over residues 638–658 (SVDSISQESSTSSFSSMSASS). Residues 658-707 (SRQEETKKDYREVEKLLRAVADGDLEMVRYLLEWTEEDLEDAEDTVSAAD) are required for interaction with VAMP7. ANK repeat units follow at residues 668–698 (REVE…DLED), 743–772 (DGSS…NAGA), 776–805 (DQAV…KPNK), 809–838 (SGNT…SINA), and 842–871 (KGNT…SVQV). The sufficient for interaction with VPS29 stretch occupies residues 692-746 (TEEDLEDAEDTVSAADPEFCHPLCQCPKCAPAQKRLAKVPASGLGVNVTSQDGSS). Ser-962 and Ser-970 each carry phosphoserine. The tract at residues 987 to 1050 (PAQSGSHAAE…TPQEVSASRS (64 aa)) is disordered. Residues 994–1004 (AAEKGNSDWPE) show a composition bias toward basic and acidic residues. Residue Thr-1023 is modified to Phosphothreonine. Over residues 1040 to 1050 (STPQEVSASRS) the composition is skewed to polar residues.

Interacts with RAB21 (GDP-bound form), VPS29, RAB32 (GTP-bound form), RAB38 (GTP-bound form), VAMP7, KIF5A, KIF5C, GOLGA4. Interacts with low affinity with RAB5. ANKRD27:RAB32 heterodimers can homodimerize to form tetramers. Can interact with RAB38 or RAB32, VPS29 and VAMP7 simultaneously. A decreased interaction with RAB32 seen in the presence of SGSM2.

It is found in the early endosome. Its subcellular location is the late endosome. The protein resides in the cytoplasmic vesicle membrane. It localises to the lysosome. The protein localises to the cell membrane. It is found in the melanosome. May be a guanine exchange factor (GEF) for Rab21, Rab32 and Rab38 and regulate endosome dynamics. May regulate the participation of VAMP7 in membrane fusion events; in vitro inhibits VAMP7-mediated SNARE complex formation by trapping VAMP7 in a closed, fusogenically inactive conformation. Involved in peripheral melanosomal distribution of TYRP1 in melanocytes; the function, which probably is implicating vesicle-trafficking, includes cooperation with Rab32, Rab38 and VAMP7. Involved in the regulation of neurite growth; the function seems to require its GEF activity, probably towards Rab21, and VAMP7 but not Rab32/38. Proposed to be involved in Golgi sorting of VAMP7 and transport of VAMP7 vesicles to the cell surface; the function seems to implicate kinesin heavy chain isoform 5 proteins, GOLGA4, RAB21 and MACF1. Required for the colocalization of VAMP7 and Rab21, probably on TGN sites. Involved in GLUT1 endosome-to-plasma membrane trafficking; the function is dependent of association with VPS29. Regulates the proper trafficking of melanogenic enzymes TYR, TYRP1 and DCT/TYRP2 to melanosomes in melanocytes. This is Ankyrin repeat domain-containing protein 27 (ANKRD27) from Homo sapiens (Human).